Reading from the N-terminus, the 370-residue chain is Ubiquitin carboxyl-terminal hydrolase 12-B (370 aa).

The USP domain maps to 39 to 369; the sequence is FGLVNFGNTC…SGYILFYQSR (331 aa). The active-site Nucleophile is C48. A disordered region spans residues 145 to 168; sequence KQEKQNGRIPNGNIDNENNNNTPD. Positions 155-165 are enriched in low complexity; it reads NGNIDNENNNN. C186, C189, C233, and C236 together coordinate Zn(2+). Residue H317 is the Proton acceptor of the active site.

Belongs to the peptidase C19 family. USP12/USP46 subfamily. Interacts with WDR48.

The catalysed reaction is Thiol-dependent hydrolysis of ester, thioester, amide, peptide and isopeptide bonds formed by the C-terminal Gly of ubiquitin (a 76-residue protein attached to proteins as an intracellular targeting signal).. Its function is as follows. Deubiquitinating enzyme. Has almost no deubiquitinating activity by itself and requires the interaction with wdr48 to have a high activity. This is Ubiquitin carboxyl-terminal hydrolase 12-B (usp12-b) from Xenopus laevis (African clawed frog).